The primary structure comprises 532 residues: uncharacterized protein (532 aa).

Helical transmembrane passes span 7–26 (HSSY…LGRI), 30–52 (GLSL…GVII), 59–77 (FGLV…PGFF), 87–109 (LILI…KYAF), 116–134 (VVGL…AVAI), and 139–161 (SPLA…ILFV). RCK C-terminal domains lie at 179–262 (LEIE…LIGE) and 263–346 (REEG…LLGN). 6 consecutive transmembrane segments (helical) span residues 356–376 (FFPI…NISF), 386–408 (LTGG…PIIW), 421–440 (LGLL…NLVA), 445–467 (SGLL…AVIV), 474–496 (INIL…LAAA), and 506–528 (SVAY…QVIS).

The protein belongs to the AAE transporter (TC 2.A.81) family.

The protein localises to the cell membrane. This is an uncharacterized protein from Bacteroides thetaiotaomicron (strain ATCC 29148 / DSM 2079 / JCM 5827 / CCUG 10774 / NCTC 10582 / VPI-5482 / E50).